The primary structure comprises 174 residues: Guided entry of tail-anchored proteins factor 1 (174 aa).

Residues 1-8 lie on the Lumenal side of the membrane; the sequence is MSSAAADH. Residues 9-29 traverse the membrane as a helical segment; sequence WAWLLVLSFVFGCNVLRVLLP. Residues 30–99 lie on the Cytoplasmic side of the membrane; it reads SFSSFMSRVL…VKARTAQLAK (70 aa). Residues 39-94 adopt a coiled-coil conformation; it reads LQKDAEQESQMRAEIQDMKQELSTVNMMDEFARYARLERKINKMTDKLKTHVKART. The interaction with GET3/TRC40 stretch occupies residues 39 to 97; sequence LQKDAEQESQMRAEIQDMKQELSTVNMMDEFARYARLERKINKMTDKLKTHVKARTAQL. The chain crosses the membrane as a helical span at residues 100-120; the sequence is IKWVISVAFYVLQAALMISLI. At 121–148 the chain is on the lumenal side; it reads WKYYSVPVAVVPSKWITPLDRLVAFPTR. The chain crosses the membrane as a helical span at residues 149–169; it reads VAGGVGITCWILVCNKVVAIV. Topologically, residues 170–174 are cytoplasmic; the sequence is LHPFS.

The protein belongs to the WRB/GET1 family. In terms of assembly, component of the Golgi to ER traffic (GET) complex, which is composed of GET1/WRB, CAMLG/GET2 and GET3. Within the complex, GET1 and CAMLG form a heterotetramer which is stabilized by phosphatidylinositol binding and which binds to the GET3 homodimer. Interacts with CAMLG (via C-terminus). GET3 shows a higher affinity for CAMLG than for GET1.

It localises to the endoplasmic reticulum membrane. Its function is as follows. Required for the post-translational delivery of tail-anchored (TA) proteins to the endoplasmic reticulum. Together with CAMLG/GET2, acts as a membrane receptor for soluble GET3/TRC40, which recognizes and selectively binds the transmembrane domain of TA proteins in the cytosol. Required to ensure correct topology and ER insertion of CAMLG. The sequence is that of Guided entry of tail-anchored proteins factor 1 from Pongo abelii (Sumatran orangutan).